We begin with the raw amino-acid sequence, 787 residues long: Phenylalanine--tRNA ligase beta subunit (787 aa).

The tRNA-binding domain maps to 38 to 151; that stretch reads GQDPAPFVVA…SDYEVGDSFF (114 aa). The B5 domain maps to 397 to 474; that stretch reads SEGRVISFNP…RMHGYDKVQE (78 aa). Mg(2+) is bound by residues Asp452, Asp458, Glu461, and Glu462. The 92-residue stretch at 694–785 folds into the FDX-ACB domain; the sequence is HKYQPVKRDF…VAQKLGGELR (92 aa).

This sequence belongs to the phenylalanyl-tRNA synthetase beta subunit family. Type 1 subfamily. In terms of assembly, tetramer of two alpha and two beta subunits. Mg(2+) serves as cofactor.

It is found in the cytoplasm. The catalysed reaction is tRNA(Phe) + L-phenylalanine + ATP = L-phenylalanyl-tRNA(Phe) + AMP + diphosphate + H(+). This Anaplasma marginale (strain St. Maries) protein is Phenylalanine--tRNA ligase beta subunit.